The sequence spans 272 residues: MKRTAFFISDGTGITAETLGQSLLAQFESIPFNKFTRPYIDSPDKARAMVQQINAAAERDGVRPIIFDTIVNQDIREILATSNGFMIDIFSSFLSPLEQELIAHSSYSVGKSHSIGGNSNYMERIEAVNFALDNDDGARTHYYDKADLILVGVSRCGKTPTCLYMAMQFGIRAANYPLTEDDMERLQLPAVLKKHHSKLFGLTIDPDRLTAIRHERKPNSRYSSFAQCEFEVREVESLFRRENIPNINSTHFSVEEISAKILVEKGVERRFK.

152–159 serves as a coordination point for ADP; the sequence is GVSRCGKT.

It belongs to the pyruvate, phosphate/water dikinase regulatory protein family. PSRP subfamily.

The enzyme catalyses [pyruvate, water dikinase] + ADP = [pyruvate, water dikinase]-phosphate + AMP + H(+). It catalyses the reaction [pyruvate, water dikinase]-phosphate + phosphate + H(+) = [pyruvate, water dikinase] + diphosphate. In terms of biological role, bifunctional serine/threonine kinase and phosphorylase involved in the regulation of the phosphoenolpyruvate synthase (PEPS) by catalyzing its phosphorylation/dephosphorylation. This chain is Putative phosphoenolpyruvate synthase regulatory protein, found in Pseudomonas putida (strain ATCC 700007 / DSM 6899 / JCM 31910 / BCRC 17059 / LMG 24140 / F1).